The following is an 88-amino-acid chain: Elongation factor 1-beta (88 aa).

The protein belongs to the EF-1-beta/EF-1-delta family.

Its function is as follows. Promotes the exchange of GDP for GTP in EF-1-alpha/GDP, thus allowing the regeneration of EF-1-alpha/GTP that could then be used to form the ternary complex EF-1-alpha/GTP/AAtRNA. This is Elongation factor 1-beta from Halobacterium salinarum (strain ATCC 29341 / DSM 671 / R1).